Here is a 41-residue protein sequence, read N- to C-terminus: Large ribosomal subunit protein bL36 (41 aa).

Belongs to the bacterial ribosomal protein bL36 family.

This Rhizobium rhizogenes (strain K84 / ATCC BAA-868) (Agrobacterium radiobacter) protein is Large ribosomal subunit protein bL36.